We begin with the raw amino-acid sequence, 113 residues long: U11-theraphotoxin-Hhn1a (113 aa).

Positions 1–21 (MNTVRVTFLLVFVLAVSLGQA) are cleaved as a signal peptide. Positions 22–74 (DKDENRMEVQEKTEQGKSYLDFAENLLLQKLEELEAKLLEEDSEESRNSRQKR) are excised as a propeptide. The interval 61–83 (EEDSEESRNSRQKRCIGEGVPCD) is disordered. Intrachain disulfides connect Cys75-Cys90, Cys82-Cys95, and Cys89-Cys110.

It belongs to the neurotoxin 14 (magi-1) family. 01 (HNTX-16) subfamily. Expressed by the venom gland.

The protein localises to the secreted. Its function is as follows. Probable ion channel inhibitor. This Cyriopagopus hainanus (Chinese bird spider) protein is U11-theraphotoxin-Hhn1a.